The primary structure comprises 375 residues: DNA replication and repair protein RecF (375 aa).

ATP is bound at residue 30-37 (GLNGQGKT).

The protein belongs to the RecF family.

It is found in the cytoplasm. The RecF protein is involved in DNA metabolism; it is required for DNA replication and normal SOS inducibility. RecF binds preferentially to single-stranded, linear DNA. It also seems to bind ATP. This Halothermothrix orenii (strain H 168 / OCM 544 / DSM 9562) protein is DNA replication and repair protein RecF.